The following is a 330-amino-acid chain: 2-methoxy-6-polyprenyl-1,4-benzoquinol methylase, mitochondrial (330 aa).

The N-terminal 42 residues, 1–42, are a transit peptide targeting the mitochondrion; that stretch reads MAAPRSWALWSFCGCGWSRAVSGCRLPGLRSSSPRGPLGARL. S-adenosyl-L-methionine is bound by residues Thr117, Asp171, and 199–200; that span reads DA.

It belongs to the class I-like SAM-binding methyltransferase superfamily. MenG/UbiE family. Component of a multi-subunit COQ enzyme complex, composed of at least COQ3, COQ4, COQ5, COQ6, COQ7 and COQ9. Interacts with PYURF; the interaction is direct, stabilizes COQ5 protein and associates PYURF with COQ enzyme complex.

It is found in the mitochondrion inner membrane. It catalyses the reaction 2-methoxy-6-(all-trans-decaprenyl)benzene-1,4-diol + S-adenosyl-L-methionine = 5-methoxy-2-methyl-3-(all-trans-decaprenyl)benzene-1,4-diol + S-adenosyl-L-homocysteine + H(+). Its pathway is cofactor biosynthesis; ubiquinone biosynthesis. Methyltransferase required for the conversion of 2-decaprenyl-6-methoxy-1,4-benzoquinol (DDMQH2) to 2-decaprenyl-3-methyl-6-methoxy-1,4-benzoquinol (DMQH2). The chain is 2-methoxy-6-polyprenyl-1,4-benzoquinol methylase, mitochondrial from Bos taurus (Bovine).